A 210-amino-acid chain; its full sequence is Uracil phosphoribosyltransferase (210 aa).

Residues Arg78, Arg103, and 130–138 (DPMLATGGT) contribute to the 5-phospho-alpha-D-ribose 1-diphosphate site. Uracil is bound by residues Ile193 and 198–200 (GDA). Asp199 contributes to the 5-phospho-alpha-D-ribose 1-diphosphate binding site.

It belongs to the UPRTase family. Requires Mg(2+) as cofactor.

It catalyses the reaction UMP + diphosphate = 5-phospho-alpha-D-ribose 1-diphosphate + uracil. Its pathway is pyrimidine metabolism; UMP biosynthesis via salvage pathway; UMP from uracil: step 1/1. Allosterically activated by GTP. Its function is as follows. Catalyzes the conversion of uracil and 5-phospho-alpha-D-ribose 1-diphosphate (PRPP) to UMP and diphosphate. The chain is Uracil phosphoribosyltransferase from Stenotrophomonas maltophilia (strain R551-3).